The following is a 299-amino-acid chain: Oxygen-dependent coproporphyrinogen-III oxidase (299 aa).

Ser92 provides a ligand contact to substrate. 2 residues coordinate a divalent metal cation: His96 and His106. His106 (proton donor) is an active-site residue. A substrate-binding site is contributed by 108-110 (NVR). A divalent metal cation-binding residues include His145 and His175. Residues 240–275 (YVEFNLVWDRGTLFGLQTGGRTESILMSMPPLVRWE) form an important for dimerization region. Substrate is bound at residue 258-260 (GGR).

The protein belongs to the aerobic coproporphyrinogen-III oxidase family. In terms of assembly, homodimer. Requires a divalent metal cation as cofactor.

It is found in the cytoplasm. The enzyme catalyses coproporphyrinogen III + O2 + 2 H(+) = protoporphyrinogen IX + 2 CO2 + 2 H2O. It functions in the pathway porphyrin-containing compound metabolism; protoporphyrin-IX biosynthesis; protoporphyrinogen-IX from coproporphyrinogen-III (O2 route): step 1/1. Functionally, involved in the heme biosynthesis. Catalyzes the aerobic oxidative decarboxylation of propionate groups of rings A and B of coproporphyrinogen-III to yield the vinyl groups in protoporphyrinogen-IX. The polypeptide is Oxygen-dependent coproporphyrinogen-III oxidase (Salmonella paratyphi B (strain ATCC BAA-1250 / SPB7)).